The chain runs to 238 residues: 2-C-methyl-D-erythritol 4-phosphate cytidylyltransferase (238 aa).

The protein belongs to the IspD/TarI cytidylyltransferase family. IspD subfamily.

The catalysed reaction is 2-C-methyl-D-erythritol 4-phosphate + CTP + H(+) = 4-CDP-2-C-methyl-D-erythritol + diphosphate. It participates in isoprenoid biosynthesis; isopentenyl diphosphate biosynthesis via DXP pathway; isopentenyl diphosphate from 1-deoxy-D-xylulose 5-phosphate: step 2/6. In terms of biological role, catalyzes the formation of 4-diphosphocytidyl-2-C-methyl-D-erythritol from CTP and 2-C-methyl-D-erythritol 4-phosphate (MEP). The protein is 2-C-methyl-D-erythritol 4-phosphate cytidylyltransferase of Acinetobacter baumannii (strain ACICU).